We begin with the raw amino-acid sequence, 471 residues long: Arginine biosynthesis bifunctional protein ArgJ, mitochondrial (471 aa).

The transit peptide at 1–33 (MAMAGCNGFFLHQLRQPRLQLARQLGRTPSRAY) directs the protein to the mitochondrion. Positions 201, 230, 241, 327, 466, and 471 each coordinate substrate. The active-site Nucleophile is the threonine 241.

Belongs to the ArgJ family. As to quaternary structure, heterodimer of an alpha and a beta chain. In terms of processing, the alpha and beta chains are autoproteolytically processed from a single precursor protein within the mitochondrion.

The protein localises to the mitochondrion matrix. The enzyme catalyses N(2)-acetyl-L-ornithine + L-glutamate = N-acetyl-L-glutamate + L-ornithine. The catalysed reaction is L-glutamate + acetyl-CoA = N-acetyl-L-glutamate + CoA + H(+). It participates in amino-acid biosynthesis; L-arginine biosynthesis; L-ornithine and N-acetyl-L-glutamate from L-glutamate and N(2)-acetyl-L-ornithine (cyclic): step 1/1. The protein operates within amino-acid biosynthesis; L-arginine biosynthesis; N(2)-acetyl-L-ornithine from L-glutamate: step 1/4. Its function is as follows. Catalyzes two activities which are involved in the cyclic version of arginine biosynthesis: the synthesis of acetylglutamate from glutamate and acetyl-CoA, and of ornithine by transacetylation between acetylornithine and glutamate. The chain is Arginine biosynthesis bifunctional protein ArgJ, mitochondrial from Chaetomium globosum (strain ATCC 6205 / CBS 148.51 / DSM 1962 / NBRC 6347 / NRRL 1970) (Soil fungus).